Here is a 584-residue protein sequence, read N- to C-terminus: Breast carcinoma-amplified sequence 1 (584 aa).

Disordered stretches follow at residues 1 to 29 (MGNQMSVPQRVEDQENEPEAETYQDNASA), 59 to 280 (VATS…AAAI), and 297 to 377 (PNKA…GKLF). Polar residues-rich tracts occupy residues 59–69 (VATSSPETTEI) and 112–128 (ADSSLGSVKLDVSSNKA). Phosphoserine is present on residues S124 and S192. Composition is skewed to basic and acidic residues over residues 186–226 (SKPK…KVDE), 238–252 (PAGKDIVDGKEKEGQ), and 300–311 (AETKKDPEDTGA). A Phosphoserine modification is found at S314. The segment covering 314 to 354 (SPTTSADLKSDKANFTSQETQGAGKNSKGCNPSGHTQSVTT) has biased composition (polar residues). Basic and acidic residues predominate over residues 357–366 (PAKEGTKEKS). A phosphoserine mark is found at S381 and S399. Residues 415–584 (TVDLNEGDAA…VSIGPVGKSK (170 aa)) form a disordered region. A compositionally biased stretch (basic and acidic residues) spans 428 to 439 (TEAKLKREESKP). The residue at position 480 (T480) is a Phosphothreonine. The span at 494–506 (KGKEGSSKDKKSA) shows a compositional bias: basic and acidic residues. Polar residues predominate over residues 525 to 540 (CTEQATVDTNSLQNGD). Over residues 541-550 (KLQKRPEKRQ) the composition is skewed to basic and acidic residues. S552 is modified (phosphoserine). Residues 565 to 584 (MLDAQVQTDPVSIGPVGKSK) are interacts with DYNLL1 and DYNLL2.

Homodimer. Interacts with DYNLL1 and DYNLL2. Highly expressed in the brain and, more specifically, in oligodendrocytes (at protein level). Expressed in the prostate, and at lower levels in testis, intestine and colon. Overexpressed in most breast cancer cell lines and down-regulated in some colorectal tumors.

Its subcellular location is the cytoplasm. Functionally, required for myelination. In Homo sapiens (Human), this protein is Breast carcinoma-amplified sequence 1 (BCAS1).